A 493-amino-acid polypeptide reads, in one-letter code: Acetylcholine receptor subunit epsilon (493 aa).

A signal peptide spans 1 to 20 (MARAPLGVLLLLGLLGRGVG). Residues 21 to 239 (KNEELRLYHH…VIYSLIIRRK (219 aa)) are Extracellular-facing. N-linked (GlcNAc...) asparagine glycosylation is found at Asn-86 and Asn-161. Cys-148 and Cys-162 are oxidised to a cystine. A helical transmembrane segment spans residues 240–264 (PLFYVINIIVPCVLISGLVLLAYFL). Over 265–272 (PAQAGGQK) the chain is Cytoplasmic. The helical transmembrane segment at 273 to 291 (CTVSINVLLAQTVFLFLIA) threads the bilayer. Residues 292-306 (QKIPETSLSVPLLGR) are Extracellular-facing. Residues 307 to 328 (FLIFVMVVATLIVMNCVIVLNV) form a helical membrane-spanning segment. At 329 to 456 (SQRTPTTHAM…WVRMGNALDN (128 aa)) the chain is on the cytoplasmic side. The chain crosses the membrane as a helical span at residues 457-480 (ICFWAALVLFSVGSSLIFLGAYFN). Topologically, residues 481-493 (RVPDLPYAPCIQP) are extracellular.

It belongs to the ligand-gated ion channel (TC 1.A.9) family. Acetylcholine receptor (TC 1.A.9.1) subfamily. Epsilon/CHRNE sub-subfamily. Pentamer of two alpha chains, and one each of the beta, delta, and gamma (in immature muscle) or epsilon (in mature muscle) chains. The muscle heteropentamer composed of alpha-1, beta-1, delta, epsilon subunits interacts with the alpha-conotoxin ImII.

The protein localises to the postsynaptic cell membrane. It is found in the cell membrane. It carries out the reaction K(+)(in) = K(+)(out). The enzyme catalyses Na(+)(in) = Na(+)(out). Its function is as follows. After binding acetylcholine, the AChR responds by an extensive change in conformation that affects all subunits and leads to opening of an ion-conducting channel across the plasma membrane. This Homo sapiens (Human) protein is Acetylcholine receptor subunit epsilon.